Here is an 80-residue protein sequence, read N- to C-terminus: Bowman-Birk type proteinase inhibitor DE-4 (80 aa).

Over residues 1-10 the composition is skewed to acidic residues; sequence DDDHSDDEPR. The segment at 1 to 29 is disordered; the sequence is DDDHSDDEPRESESSKPCCSSCCTRSRPP. Low complexity predominate over residues 15 to 29; sequence SKPCCSSCCTRSRPP. 7 disulfides stabilise this stretch: cysteine 18–cysteine 71, cysteine 19–cysteine 33, cysteine 22–cysteine 67, cysteine 23–cysteine 31, cysteine 41–cysteine 48, cysteine 45–cysteine 60, and cysteine 50–cysteine 58.

Belongs to the Bowman-Birk serine protease inhibitor family.

This is Bowman-Birk type proteinase inhibitor DE-4 from Philenoptera violacea (Apple-leaf).